We begin with the raw amino-acid sequence, 674 residues long: Methionine--tRNA ligase (674 aa).

Residues 12-22 (PYANGPIHLGH) carry the 'HIGH' region motif. C143, C146, C156, and C159 together coordinate Zn(2+). Positions 328-332 (KMSKS) match the 'KMSKS' region motif. An ATP-binding site is contributed by K331. Residues 573–674 (SFAKLDLRIA…EGARPGMRVK (102 aa)) form the tRNA-binding domain.

Belongs to the class-I aminoacyl-tRNA synthetase family. MetG type 1 subfamily. Homodimer. Zn(2+) serves as cofactor.

It is found in the cytoplasm. The catalysed reaction is tRNA(Met) + L-methionine + ATP = L-methionyl-tRNA(Met) + AMP + diphosphate. Is required not only for elongation of protein synthesis but also for the initiation of all mRNA translation through initiator tRNA(fMet) aminoacylation. This is Methionine--tRNA ligase from Nitrosococcus oceani (strain ATCC 19707 / BCRC 17464 / JCM 30415 / NCIMB 11848 / C-107).